The sequence spans 288 residues: Aquaporin PIP 1-3 (288 aa).

The interval 1–30 (MEGKEEDVRLGANRYTERQPIGTAAQGAEE) is disordered. 2 helical membrane-spanning segments follow: residues 57–77 (IAEFVATFLFLYISILTVMGV) and 92–114 (IAWSFGGMIFALVYCTAGISGGH). The short motif at 116–118 (NPA) is the NPA 1 element. 3 consecutive transmembrane segments (helical) span residues 135-155 (VFYMAMQCLGAICGAGVVKGF), 177-197 (GDGLGAEIVGTFVLVYTVFSA), and 211-231 (ILAPLPIGFAVFLVHLATIPI). Positions 237–239 (NPA) match the NPA 2 motif. A helical membrane pass occupies residues 259–279 (IFWVGPFIGAALAAIYHVVVI).

The protein belongs to the MIP/aquaporin (TC 1.A.8) family. PIP (TC 1.A.8.11) subfamily. As to expression, expressed in roots and leaves.

Its subcellular location is the cell membrane. Water channel required to facilitate the transport of water across cell membrane. Increases the capacity for root water uptake under water deficit. May play a role in drought avoidance in upland rice. The chain is Aquaporin PIP 1-3 (PIP1-3) from Oryza sativa subsp. japonica (Rice).